Here is a 126-residue protein sequence, read N- to C-terminus: Histone H2B type 3-B (126 aa).

Positions 1 to 12 (MPDPSKSAPAPK) are enriched in low complexity. Positions 1–35 (MPDPSKSAPAPKKGSKKAVTKAQKKDGKKRKRGRK) are disordered. Pro2 carries the N-acetylproline modification. At Lys6 the chain carries N6-(2-hydroxyisobutyryl)lysine; alternate. Lys6 bears the N6-(beta-hydroxybutyryl)lysine; alternate mark. Lys6 bears the N6-acetyllysine; alternate mark. Lys6 bears the N6-butyryllysine; alternate mark. Lys6 is subject to N6-crotonyllysine; alternate. Lys6 bears the N6-lactoyllysine; alternate mark. Lys6 is covalently cross-linked (Glycyl lysine isopeptide (Lys-Gly) (interchain with G-Cter in SUMO2); alternate). Ser7 carries the ADP-ribosylserine modification. Lys12 is modified (N6-(beta-hydroxybutyryl)lysine; alternate). Residues Lys12 and Lys13 each carry the N6-acetyllysine; alternate modification. An N6-crotonyllysine; alternate mark is found at Lys12 and Lys13. Lys12 carries the N6-lactoyllysine; alternate modification. Residue Lys13 is modified to N6-(2-hydroxyisobutyryl)lysine; alternate. Residue Ser15 is modified to Phosphoserine; by STK4/MST1. N6-acetyllysine; alternate is present on residues Lys16, Lys17, Lys21, and Lys24. An N6-crotonyllysine; alternate mark is found at Lys16, Lys17, Lys21, and Lys24. Residues Lys16, Lys17, Lys21, and Lys24 each carry the N6-lactoyllysine; alternate modification. An N6-(beta-hydroxybutyryl)lysine; alternate mark is found at Lys17 and Lys21. Lys17 is subject to N6-glutaryllysine; alternate. Lys21 and Lys24 each carry N6-(2-hydroxyisobutyryl)lysine; alternate. Lys21 bears the N6-butyryllysine; alternate mark. Lys21 is covalently cross-linked (Glycyl lysine isopeptide (Lys-Gly) (interchain with G-Cter in SUMO2); alternate). Residue Lys25 is modified to N6-(2-hydroxyisobutyryl)lysine. Position 35 is an N6-(2-hydroxyisobutyryl)lysine; alternate (Lys35). N6-(beta-hydroxybutyryl)lysine; alternate is present on Lys35. Lys35 is modified (N6-crotonyllysine; alternate). Lys35 is subject to N6-glutaryllysine; alternate. The residue at position 35 (Lys35) is an N6-succinyllysine; alternate. Residue Lys35 forms a Glycyl lysine isopeptide (Lys-Gly) (interchain with G-Cter in ubiquitin); alternate linkage. Glu36 carries the polyADP-ribosyl glutamic acid modification. Ser37 carries the post-translational modification Phosphoserine; by AMPK. 3 positions are modified to N6-(2-hydroxyisobutyryl)lysine; alternate: Lys44, Lys47, and Lys58. Lys44 carries the N6-lactoyllysine; alternate modification. N6-glutaryllysine; alternate occurs at positions 44 and 47. Lys47 bears the N6-methyllysine; alternate mark. The residue at position 58 (Lys58) is an N6,N6-dimethyllysine; alternate. Arg80 is modified (dimethylated arginine). Lys86 carries the N6-(2-hydroxyisobutyryl)lysine; alternate modification. Lys86 carries the N6-(beta-hydroxybutyryl)lysine; alternate modification. Residue Lys86 is modified to N6-acetyllysine; alternate. Lys86 bears the N6-lactoyllysine; alternate mark. Lys86 bears the N6,N6,N6-trimethyllysine; alternate mark. Omega-N-methylarginine occurs at positions 87 and 93. The residue at position 109 (Lys109) is an N6-(2-hydroxyisobutyryl)lysine; alternate. The residue at position 109 (Lys109) is an N6-lactoyllysine; alternate. Position 109 is an N6-glutaryllysine; alternate (Lys109). Lys109 bears the N6-methyllysine; alternate mark. Ser113 carries an O-linked (GlcNAc) serine glycan. Thr116 carries the phosphothreonine modification. An N6-(2-hydroxyisobutyryl)lysine; alternate mark is found at Lys117 and Lys121. Lys117 and Lys121 each carry N6-(beta-hydroxybutyryl)lysine; alternate. N6-lactoyllysine; alternate is present on residues Lys117 and Lys121. Residues Lys117 and Lys121 each carry the N6-glutaryllysine; alternate modification. 2 positions are modified to N6-succinyllysine; alternate: Lys117 and Lys121. Lys117 carries the post-translational modification N6-malonyllysine; alternate. An N6-methylated lysine; alternate modification is found at Lys117. Lys121 participates in a covalent cross-link: Glycyl lysine isopeptide (Lys-Gly) (interchain with G-Cter in ubiquitin); alternate.

This sequence belongs to the histone H2B family. In terms of assembly, the nucleosome is a histone octamer containing two molecules each of H2A, H2B, H3 and H4 assembled in one H3-H4 heterotetramer and two H2A-H2B heterodimers. The octamer wraps approximately 147 bp of DNA. Post-translationally, monoubiquitination at Lys-35 (H2BK34Ub) by the MSL1/MSL2 dimer is required for histone H3 'Lys-4' (H3K4me) and 'Lys-79' (H3K79me) methylation and transcription activation at specific gene loci, such as HOXA9 and MEIS1 loci. Similarly, monoubiquitination at Lys-121 (H2BK120Ub) by the RNF20/40 complex gives a specific tag for epigenetic transcriptional activation and is also prerequisite for histone H3 'Lys-4' and 'Lys-79' methylation. It also functions cooperatively with the FACT dimer to stimulate elongation by RNA polymerase II. H2BK120Ub also acts as a regulator of mRNA splicing: deubiquitination by USP49 is required for efficient cotranscriptional splicing of a large set of exons. Phosphorylation at Ser-37 (H2BS36ph) by AMPK in response to stress promotes transcription. Phosphorylated on Ser-15 (H2BS14ph) by STK4/MST1 during apoptosis; which facilitates apoptotic chromatin condensation. Also phosphorylated on Ser-15 in response to DNA double strand breaks (DSBs), and in correlation with somatic hypermutation and immunoglobulin class-switch recombination. In terms of processing, glcNAcylation at Ser-113 promotes monoubiquitination of Lys-121. It fluctuates in response to extracellular glucose, and associates with transcribed genes. Post-translationally, ADP-ribosylated by PARP1 or PARP2 on Ser-7 (H2BS6ADPr) in response to DNA damage. H2BS6ADPr promotes recruitment of CHD1L. Poly ADP-ribosylation on Glu-36 (H2BE35ADPr) by PARP1 regulates adipogenesis: it inhibits phosphorylation at Ser-37 (H2BS36ph), thereby blocking expression of pro-adipogenetic genes. Crotonylation (Kcr) is specifically present in male germ cells and marks testis-specific genes in post-meiotic cells, including X-linked genes that escape sex chromosome inactivation in haploid cells. Crotonylation marks active promoters and enhancers and confers resistance to transcriptional repressors. It is also associated with post-meiotically activated genes on autosomes. In terms of processing, lactylated in macrophages by EP300/P300 by using lactoyl-CoA directly derived from endogenous or exogenous lactate, leading to stimulates gene transcription.

Its subcellular location is the nucleus. It is found in the chromosome. In terms of biological role, core component of nucleosome. Nucleosomes wrap and compact DNA into chromatin, limiting DNA accessibility to the cellular machineries which require DNA as a template. Histones thereby play a central role in transcription regulation, DNA repair, DNA replication and chromosomal stability. DNA accessibility is regulated via a complex set of post-translational modifications of histones, also called histone code, and nucleosome remodeling. The chain is Histone H2B type 3-B from Homo sapiens (Human).